The chain runs to 358 residues: 3-isopropylmalate dehydrogenase (358 aa).

Substrate is bound by residues arginine 92, arginine 102, arginine 130, and aspartate 224. Aspartate 224, aspartate 248, and aspartate 252 together coordinate Mg(2+). NAD(+) is bound at residue 282–294; the sequence is GSAPDIAGQGIAN.

Belongs to the isocitrate and isopropylmalate dehydrogenases family. LeuB type 1 subfamily. Homodimer. Requires Mg(2+) as cofactor. Mn(2+) serves as cofactor.

The protein localises to the cytoplasm. It carries out the reaction (2R,3S)-3-isopropylmalate + NAD(+) = 4-methyl-2-oxopentanoate + CO2 + NADH. Its pathway is amino-acid biosynthesis; L-leucine biosynthesis; L-leucine from 3-methyl-2-oxobutanoate: step 3/4. Its function is as follows. Catalyzes the oxidation of 3-carboxy-2-hydroxy-4-methylpentanoate (3-isopropylmalate) to 3-carboxy-4-methyl-2-oxopentanoate. The product decarboxylates to 4-methyl-2 oxopentanoate. The protein is 3-isopropylmalate dehydrogenase of Bordetella pertussis (strain Tohama I / ATCC BAA-589 / NCTC 13251).